A 62-amino-acid chain; its full sequence is Phycobilisome degradation protein NblA homolog 1 (62 aa).

This sequence to Synechococcus PCC 7942 NblA and some, to chloroplast ycf18.

In Synechocystis sp. (strain ATCC 27184 / PCC 6803 / Kazusa), this protein is Phycobilisome degradation protein NblA homolog 1.